Reading from the N-terminus, the 605-residue chain is Aspartate--tRNA(Asp/Asn) ligase (605 aa).

L-aspartate is bound at residue E183. The aspartate stretch occupies residues 207 to 210 (QLFK). Residue R229 coordinates L-aspartate. Residues 229 to 231 (RDE) and Q238 contribute to the ATP site. Residue H457 coordinates L-aspartate. E497 serves as a coordination point for ATP. An L-aspartate-binding site is contributed by R504. Residue 549–552 (GLDR) coordinates ATP.

It belongs to the class-II aminoacyl-tRNA synthetase family. Type 1 subfamily. As to quaternary structure, homodimer.

Its subcellular location is the cytoplasm. The catalysed reaction is tRNA(Asx) + L-aspartate + ATP = L-aspartyl-tRNA(Asx) + AMP + diphosphate. Aspartyl-tRNA synthetase with relaxed tRNA specificity since it is able to aspartylate not only its cognate tRNA(Asp) but also tRNA(Asn). Reaction proceeds in two steps: L-aspartate is first activated by ATP to form Asp-AMP and then transferred to the acceptor end of tRNA(Asp/Asn). This chain is Aspartate--tRNA(Asp/Asn) ligase, found in Persephonella marina (strain DSM 14350 / EX-H1).